Consider the following 345-residue polypeptide: Succinylglutamate desuccinylase (345 aa).

The Zn(2+) site is built by His-64, Glu-67, and His-161. The active site involves Glu-225.

It belongs to the AspA/AstE family. Succinylglutamate desuccinylase subfamily. Requires Zn(2+) as cofactor.

It carries out the reaction N-succinyl-L-glutamate + H2O = L-glutamate + succinate. It functions in the pathway amino-acid degradation; L-arginine degradation via AST pathway; L-glutamate and succinate from L-arginine: step 5/5. In terms of biological role, transforms N(2)-succinylglutamate into succinate and glutamate. This Shewanella piezotolerans (strain WP3 / JCM 13877) protein is Succinylglutamate desuccinylase.